The primary structure comprises 221 residues: Sentrin-specific protease 8 (221 aa).

Position 1 is an N-acetylmethionine (M1). Positions S11–L174 are protease. Residues H102 and D119 contribute to the active site. C163 acts as the Nucleophile in catalysis.

This sequence belongs to the peptidase C48 family.

Functionally, protease that catalyzes two essential functions in the NEDD8 pathway: processing of full-length NEDD8 to its mature form and deconjugation of NEDD8 from targeted proteins such as cullins or p53. The chain is Sentrin-specific protease 8 (Senp8) from Mus musculus (Mouse).